We begin with the raw amino-acid sequence, 133 residues long: Ribosome-binding factor A (133 aa).

This sequence belongs to the RbfA family. Monomer. Binds 30S ribosomal subunits, but not 50S ribosomal subunits or 70S ribosomes.

The protein localises to the cytoplasm. Its function is as follows. One of several proteins that assist in the late maturation steps of the functional core of the 30S ribosomal subunit. Associates with free 30S ribosomal subunits (but not with 30S subunits that are part of 70S ribosomes or polysomes). Required for efficient processing of 16S rRNA. May interact with the 5'-terminal helix region of 16S rRNA. This is Ribosome-binding factor A from Synechocystis sp. (strain ATCC 27184 / PCC 6803 / Kazusa).